Here is a 697-residue protein sequence, read N- to C-terminus: MFS antiporter QDR3 (697 aa).

Residues 1–141 (MSHSPNLSPQ…ARDYPNKIKY (141 aa)) lie on the Cytoplasmic side of the membrane. The segment at 38 to 109 (HPIGHHGREQ…KPTSTSIKTN (72 aa)) is disordered. Composition is skewed to low complexity over residues 53 to 69 (NTTKTTTTTTNKIHTTT) and 85 to 99 (DLSSLESQQEQYLSQ). Residues 142-162 (LIVFIIAFASLAGPFGTSVML) form a helical membrane-spanning segment. The Extracellular segment spans residues 163–180 (PAIDDIVNDLNTNVSTVN). 2 N-linked (GlcNAc...) asparagine glycosylation sites follow: Asn175 and Asn180. The helical transmembrane segment at 181–201 (VSVGIYLLSLGIFPLWWSSFS) threads the bilayer. Topologically, residues 202–215 (ERFGRRSVYMVSFT) are cytoplasmic. Residues 216–236 (LFVAFSIGTALSPNIAALIVL) form a helical membrane-spanning segment. The Extracellular segment spans residues 237 to 240 (RVLQ). A helical membrane pass occupies residues 241–261 (GGSSASVQAVGAGTIADLFIP). At 262–268 (QERGQAM) the chain is on the cytoplasmic side. The chain crosses the membrane as a helical span at residues 269 to 289 (GLYYLGPLAGPFLAPILGGAV). Residues 290 to 296 (SQAWGWR) lie on the Extracellular side of the membrane. The chain crosses the membrane as a helical span at residues 297-317 (ATQWLLMIISACSFVLITFFL). Topologically, residues 318–485 (PETLRRVDTI…SIILLKHPPV (168 aa)) are cytoplasmic. Positions 338–367 (DNNGSQNEKIHDDFAGADNSSVHDIDGNPI) are disordered. Residues 486–506 (VLVISFSAISFAAIYFFNMAI) form a helical membrane-spanning segment. Topologically, residues 507 to 519 (SYEYARSPYNFSS) are extracellular. N-linked (GlcNAc...) asparagine glycosylation occurs at Asn516. Residues 520-540 (VILGLMYIPNSVTYFMASIIG) form a helical membrane-spanning segment. Residues 541 to 565 (GKWNDRLLNRYAQKHGELVPESRLS) are Cytoplasmic-facing. The chain crosses the membrane as a helical span at residues 566–586 (WNIVVAIILYPMACLIFGWTI). The Extracellular portion of the chain corresponds to 587–590 (KYRE). The chain crosses the membrane as a helical span at residues 591–611 (FWVIPLIGTALFGFASMLVIG). Topologically, residues 612 to 626 (ATVTYLVDSLPGKGA) are cytoplasmic. A helical membrane pass occupies residues 627 to 647 (TGVALNNLIRQILAAIATFIV). Over 648–653 (EPLLRA) the chain is Extracellular. The chain crosses the membrane as a helical span at residues 654–674 (IGAGVLFSIIAGILLVSSLVL). Residues 675–697 (LYLKKRGAFFREHYDVMDLYAKL) are Cytoplasmic-facing.

It belongs to the major facilitator superfamily. CAR1 family.

Its subcellular location is the cell membrane. Functionally, MFS antiporter that does not display functional linkage as drug transporter and performs functions that significantly affect biofilm development and virulence. No substrate for transport has been identified yet, but plays an important role in the growth in the host. The chain is MFS antiporter QDR3 (QDR3) from Candida albicans (strain SC5314 / ATCC MYA-2876) (Yeast).